We begin with the raw amino-acid sequence, 222 residues long: Beta-casein (222 aa).

The signal sequence occupies residues 1–15; it reads MKVLILACLVALAIA. Thr27 bears the Phosphothreonine mark. Phosphoserine occurs at positions 30, 32, 33, and 34.

The protein belongs to the beta-casein family. In terms of tissue distribution, mammary gland specific. Secreted in milk.

Its subcellular location is the secreted. Its function is as follows. Important role in determination of the surface properties of the casein micelles. The sequence is that of Beta-casein (CSN2) from Capra hircus (Goat).